Reading from the N-terminus, the 425-residue chain is Serine--tRNA ligase (425 aa).

229–231 (TSE) is a binding site for L-serine. ATP is bound by residues 259–261 (RKE) and V275. E282 lines the L-serine pocket. 349 to 352 (EVTS) contacts ATP. T384 contacts L-serine.

The protein belongs to the class-II aminoacyl-tRNA synthetase family. Type-1 seryl-tRNA synthetase subfamily. Homodimer. The tRNA molecule binds across the dimer.

It localises to the cytoplasm. It catalyses the reaction tRNA(Ser) + L-serine + ATP = L-seryl-tRNA(Ser) + AMP + diphosphate + H(+). It carries out the reaction tRNA(Sec) + L-serine + ATP = L-seryl-tRNA(Sec) + AMP + diphosphate + H(+). It participates in aminoacyl-tRNA biosynthesis; selenocysteinyl-tRNA(Sec) biosynthesis; L-seryl-tRNA(Sec) from L-serine and tRNA(Sec): step 1/1. Functionally, catalyzes the attachment of serine to tRNA(Ser). Is also able to aminoacylate tRNA(Sec) with serine, to form the misacylated tRNA L-seryl-tRNA(Sec), which will be further converted into selenocysteinyl-tRNA(Sec). The chain is Serine--tRNA ligase from Borrelia garinii subsp. bavariensis (strain ATCC BAA-2496 / DSM 23469 / PBi) (Borreliella bavariensis).